The chain runs to 500 residues: Glycogen synthase (500 aa).

Lys20 is an ADP-alpha-D-glucose binding site.

Belongs to the glycosyltransferase 1 family. Bacterial/plant glycogen synthase subfamily.

It carries out the reaction [(1-&gt;4)-alpha-D-glucosyl](n) + ADP-alpha-D-glucose = [(1-&gt;4)-alpha-D-glucosyl](n+1) + ADP + H(+). The protein operates within glycan biosynthesis; glycogen biosynthesis. Its function is as follows. Synthesizes alpha-1,4-glucan chains using ADP-glucose. This is Glycogen synthase from Desulforudis audaxviator (strain MP104C).